Reading from the N-terminus, the 126-residue chain is Cystatin-C (126 aa).

The signal sequence occupies residues 1–18; it reads MKMLVFPVLAALFAVGLG. In terms of domain architecture, Cystatin spans 22-115; it reads GAPRDINISE…CTFSVWSRPW (94 aa). The Secondary area of contact motif lies at 64–68; that stretch reads QVVSG. 2 cysteine pairs are disulfide-bonded: Cys-82-Cys-92 and Cys-106-Cys-126.

This sequence belongs to the cystatin family. Ubiquitously expressed in normal tissues including brain, eye, gill, heart, gullet, liver, spleen, stomach, pyloric ceca, intestine, kidney and muscle. Expressed, but not up-regulated, in lipopolysaccharide (LPS)-stimulated tissues including kidney, spleen, muscle and gill.

It localises to the secreted. In terms of biological role, thiol protease inhibitor. Has high papain inhibitory activity and inhibits to a lesser extent fish cathepsins L, S, K, F, X and bovine cathepsin B in vitro. The chain is Cystatin-C from Paralichthys olivaceus (Bastard halibut).